We begin with the raw amino-acid sequence, 361 residues long: 3-dehydroquinate synthase (361 aa).

NAD(+) is bound by residues 106–110 (GVVGD), 130–131 (TT), Lys-143, and Lys-152. Zn(2+) is bound by residues Glu-185, His-248, and His-265.

Belongs to the sugar phosphate cyclases superfamily. Dehydroquinate synthase family. It depends on NAD(+) as a cofactor. Requires Co(2+) as cofactor. Zn(2+) is required as a cofactor.

It localises to the cytoplasm. The catalysed reaction is 7-phospho-2-dehydro-3-deoxy-D-arabino-heptonate = 3-dehydroquinate + phosphate. Its pathway is metabolic intermediate biosynthesis; chorismate biosynthesis; chorismate from D-erythrose 4-phosphate and phosphoenolpyruvate: step 2/7. Its function is as follows. Catalyzes the conversion of 3-deoxy-D-arabino-heptulosonate 7-phosphate (DAHP) to dehydroquinate (DHQ). In Leptospira interrogans serogroup Icterohaemorrhagiae serovar copenhageni (strain Fiocruz L1-130), this protein is 3-dehydroquinate synthase.